A 163-amino-acid polypeptide reads, in one-letter code: Nucleotide-binding protein ROP_16630 (163 aa).

It belongs to the YajQ family.

Its function is as follows. Nucleotide-binding protein. This chain is Nucleotide-binding protein ROP_16630, found in Rhodococcus opacus (strain B4).